Here is a 172-residue protein sequence, read N- to C-terminus: 3-hydroxydecanoyl-[acyl-carrier-protein] dehydratase (172 aa).

His-71 is a catalytic residue.

Belongs to the thioester dehydratase family. FabA subfamily. In terms of assembly, homodimer.

It localises to the cytoplasm. It carries out the reaction a (3R)-hydroxyacyl-[ACP] = a (2E)-enoyl-[ACP] + H2O. The catalysed reaction is (3R)-hydroxydecanoyl-[ACP] = (2E)-decenoyl-[ACP] + H2O. The enzyme catalyses (2E)-decenoyl-[ACP] = (3Z)-decenoyl-[ACP]. The protein operates within lipid metabolism; fatty acid biosynthesis. Its function is as follows. Necessary for the introduction of cis unsaturation into fatty acids. Catalyzes the dehydration of (3R)-3-hydroxydecanoyl-ACP to E-(2)-decenoyl-ACP and then its isomerization to Z-(3)-decenoyl-ACP. Can catalyze the dehydratase reaction for beta-hydroxyacyl-ACPs with saturated chain lengths up to 16:0, being most active on intermediate chain length. The sequence is that of 3-hydroxydecanoyl-[acyl-carrier-protein] dehydratase from Escherichia coli O6:K15:H31 (strain 536 / UPEC).